A 332-amino-acid polypeptide reads, in one-letter code: MMQDLRLILIVVGAIAIIALLLHGLWTSRKERSSLFRDRPAKRSKKEREQSPIDELDEGVGEVRVRSAHPEDEPSFGHFDAAREEPVVAPKPAPAAEPAPRAVQPAAHQTPPPLSQRPDYDDILLDNYAQEEDDEPQQPAPRREPRVDDLPPVAPAAEPAFHAEPAHQPQPEVKPAVAHEPQPAPAAIKPAKLKETVLVLHVTAHQGGVIGGEILLQSVLQAGFQFGEMGIFHRHISPAGSGPVLFSLANMVKPGSFDPEMMSDFSTPGVSMFMMVPSYGDANQNFKLMLQSAQRIADDVGGVVLDDERRMMTPQKLETYKARLREVLENNA.

Topologically, residues M1–R6 are periplasmic. A helical transmembrane segment spans residues L7–T27. Topologically, residues S28–A332 are cytoplasmic. 2 stretches are compositionally biased toward basic and acidic residues: residues S34–S51 and G61–D72. A disordered region spans residues S34 to A184. Low complexity predominate over residues P98 to A107. Residues D121–P136 show a composition bias toward acidic residues. Positions P155–P171 are enriched in low complexity.

The protein belongs to the ZipA family. In terms of assembly, interacts with FtsZ via their C-terminal domains.

It localises to the cell inner membrane. Functionally, essential cell division protein that stabilizes the FtsZ protofilaments by cross-linking them and that serves as a cytoplasmic membrane anchor for the Z ring. Also required for the recruitment to the septal ring of downstream cell division proteins. The chain is Cell division protein ZipA from Serratia proteamaculans (strain 568).